A 267-amino-acid polypeptide reads, in one-letter code: N-acetylgalactosamine permease IIC component 1 (267 aa).

Topologically, residues 1–10 (MHEITLLQGL) are periplasmic. In terms of domain architecture, PTS EIIC type-4 spans 1–237 (MHEITLLQGL…VAVLGAGFAV (237 aa)). Residues 11–31 (SLAALVFVLGIDFWLEALFLF) traverse the membrane as a helical segment. Over 32 to 33 (RP) the chain is Cytoplasmic. A helical membrane pass occupies residues 34 to 54 (IIVCTLTGAILGDIQTGLITG). Over 55-66 (GLTELAFAGLTP) the chain is Periplasmic. Residues 67-87 (AGGVQPPNPIMAGLMTTVIAW) form a helical membrane-spanning segment. The Cytoplasmic segment spans residues 88-94 (STGVDAK). A helical membrane pass occupies residues 95–115 (TAIGLGLPFSLLMQYVILFFY). Topologically, residues 116–141 (SAFSLFMTKADKCAKEADTAAFSRLN) are periplasmic. The chain crosses the membrane as a helical span at residues 142–162 (WTTMLIVASAYAVIAFLCTYL). The Cytoplasmic portion of the chain corresponds to 163-177 (AQGAMQALVKAMPAW). Residues 178–198 (LTHGFEVAGGILPAVGFGLLL) form a helical membrane-spanning segment. The Periplasmic segment spans residues 199-209 (RVMFKAQYIPY). A helical transmembrane segment spans residues 210–230 (LIAGFLFVCYIQVSNLLPVAV). Over 231–267 (LGAGFAVYEFFNAKSRQQAQPQPVASKNEEEDYSNGI) the chain is Cytoplasmic.

The protein resides in the cell inner membrane. The phosphoenolpyruvate-dependent sugar phosphotransferase system (PTS), a major carbohydrate active -transport system, catalyzes the phosphorylation of incoming sugar substrates concomitant with their translocation across the cell membrane. This system is involved in N-acetylgalactosamine transport. The protein is N-acetylgalactosamine permease IIC component 1 (agaC) of Escherichia coli (strain K12).